A 206-amino-acid polypeptide reads, in one-letter code: Macrophage immunometabolism regulator (206 aa).

Residue Met-1 is modified to N-acetylmethionine. Residues 1 to 41 (MEVDINGESRSTLTTLPFPGAEANSPGKAEAEKPRCSSTPC) form a disordered region. Ser-25, Ser-140, and Ser-167 each carry phosphoserine.

The protein belongs to the UNC119-binding protein family. Interacts with UNC119 and UNC119B; interaction preferentially takes place when UNC119 and UNC119B are unliganded with myristoylated proteins. Phosphorylated. As to expression, high expression in normal macrophages, monocytes, and cultured rheumatoid arthritis synovial fibroblasts (RASFs), with lower expression in B- and T-cells, and little to no expression in other tissues and cell lines.

The protein localises to the cytoplasm. Its subcellular location is the cell projection. It localises to the cilium. In terms of biological role, regulates the macrophage function, by enhancing the resolution of inflammation and wound repair functions mediated by M2 macrophages. The regulation of macrophage function is, due at least in part, to its ability to inhibit glycolysis. May also play a role in trafficking of proteins via its interaction with UNC119 and UNC119B cargo adapters: may help the release of UNC119 and UNC119B cargo or the recycling of UNC119 and UNC119B. May play a role in ciliary membrane localization via its interaction with UNC119B and protein transport into photoreceptor cells. In Homo sapiens (Human), this protein is Macrophage immunometabolism regulator.